The chain runs to 673 residues: Probable boron transporter 7 (673 aa).

Residues 1 to 35 (MEGVKFPFGGIINDFNGRRKCYKQDWLAAFNSGVR) lie on the Cytoplasmic side of the membrane. The helical transmembrane segment at 36 to 56 (ILAPTLYIFIASALPVIAFGE) threads the bilayer. Over 57 to 75 (QLSRETDRSLGIAESLAST) the chain is Extracellular. A helical transmembrane segment spans residues 76-96 (ALCGIIHSVFGGQPLLIVGVA). The Cytoplasmic segment spans residues 97-121 (EPTIIMYTYLHSFSKSRPELGQKLY). Residues 122–142 (LAWAGWVCVWTAVLLMLLAML) traverse the membrane as a helical segment. Residues 143–160 (NACNIISRFTRIAGELFG) are Extracellular-facing. A helical membrane pass occupies residues 161-181 (MLITVLFIQEAVKGLIGEFLV). At 182–197 (PKSDDPSLEVYQFQWR) the chain is on the cytoplasmic side. The chain crosses the membrane as a helical span at residues 198 to 218 (YTNGLLAVIFSFGLLYTALKS). Topologically, residues 219 to 233 (RRARSWKYGFRWMRG) are extracellular. The helical transmembrane segment at 234-254 (FIGDYGTLLMLVLWSAFSYTV) threads the bilayer. At 255-289 (PRNLPEGVPRRLELPLPWASESLYHWTVVKDMAKV) the chain is on the cytoplasmic side. A helical transmembrane segment spans residues 290–310 (PPLYILAAFIPAIMIAGLYFF). Residues 311-330 (DHCVSAQMAQQKEFNLKNPT) are Extracellular-facing. A helical transmembrane segment spans residues 331 to 351 (AYHYDIFILGIMTLICGLLGL). Topologically, residues 352-468 (PPSNGVIPQS…EQRVSNLLQS (117 aa)) are cytoplasmic. A helical membrane pass occupies residues 469–489 (VLVGLLILAVPVLRMIPTSVL). Residues 490 to 556 (WGYFTYMAVD…QLLYFLICYG (67 aa)) are Extracellular-facing. A helical transmembrane segment spans residues 557–577 (VTWIPVGGILFPLPFFILIAL). The Cytoplasmic segment spans residues 578–673 (RQYILQRLFD…SQMVKIYNHS (96 aa)).

Belongs to the anion exchanger (TC 2.A.31.3) family.

The protein localises to the membrane. Functionally, putative boron transporter. Boron is essential for maintaining the integrity of plants cell walls. The polypeptide is Probable boron transporter 7 (BOR7) (Arabidopsis thaliana (Mouse-ear cress)).